The sequence spans 107 residues: UPF0145 protein Memar_1285 (107 aa).

It belongs to the UPF0145 family.

This Methanoculleus marisnigri (strain ATCC 35101 / DSM 1498 / JR1) protein is UPF0145 protein Memar_1285.